We begin with the raw amino-acid sequence, 185 residues long: NOP protein chaperone 1 (185 aa).

The disordered stretch occupies residues methionine 1 to isoleucine 40. Residues serine 10–serine 21 are compositionally biased toward low complexity. A phosphoserine mark is found at serine 34 and serine 66. A disordered region spans residues phenylalanine 118–lysine 185. Positions serine 143–isoleucine 152 are enriched in acidic residues. A Phosphoserine modification is found at serine 178.

In terms of assembly, interacts with NOP58, RUVBL1 and RUVBL2; the interactions are direct and NOPCHAP1 bridges the association of NOP58 with RUVBL1:RUVBL2 even in absence of snoRNAs. The interactions with RUVBL1 and RUVBL2 are disrupted upon ATP binding.

The protein resides in the nucleus. In terms of biological role, client-loading PAQosome/R2TP complex cofactor that selects NOP58 to promote box C/D small nucleolar ribonucleoprotein (snoRNP) assembly. Acts as a bridge between NOP58 and the R2TP complex via RUVBL1:RUVBL2. The polypeptide is NOP protein chaperone 1 (Homo sapiens (Human)).